The chain runs to 312 residues: Acetyl-coenzyme A carboxylase carboxyl transferase subunit alpha (312 aa).

The 262-residue stretch at 25–286 (GDDSAVEILK…GNYIIEKLNE (262 aa)) folds into the CoA carboxyltransferase C-terminal domain.

Belongs to the AccA family. Acetyl-CoA carboxylase is a heterohexamer composed of biotin carboxyl carrier protein (AccB), biotin carboxylase (AccC) and two subunits each of ACCase subunit alpha (AccA) and ACCase subunit beta (AccD).

The protein resides in the cytoplasm. The enzyme catalyses N(6)-carboxybiotinyl-L-lysyl-[protein] + acetyl-CoA = N(6)-biotinyl-L-lysyl-[protein] + malonyl-CoA. The protein operates within lipid metabolism; malonyl-CoA biosynthesis; malonyl-CoA from acetyl-CoA: step 1/1. Functionally, component of the acetyl coenzyme A carboxylase (ACC) complex. First, biotin carboxylase catalyzes the carboxylation of biotin on its carrier protein (BCCP) and then the CO(2) group is transferred by the carboxyltransferase to acetyl-CoA to form malonyl-CoA. This is Acetyl-coenzyme A carboxylase carboxyl transferase subunit alpha from Campylobacter hominis (strain ATCC BAA-381 / DSM 21671 / CCUG 45161 / LMG 19568 / NCTC 13146 / CH001A).